The chain runs to 303 residues: Serine/threonine-protein phosphatase PP-X homolog 1 (303 aa).

Mn(2+)-binding residues include Asp51, His53, Asp79, and Asn111. The active-site Proton donor is His112. Mn(2+) is bound by residues His161 and His235.

Belongs to the PPP phosphatase family. PP-4 (PP-X) subfamily. The cofactor is Mn(2+).

It carries out the reaction O-phospho-L-seryl-[protein] + H2O = L-seryl-[protein] + phosphate. The enzyme catalyses O-phospho-L-threonyl-[protein] + H2O = L-threonyl-[protein] + phosphate. In Paramecium tetraurelia, this protein is Serine/threonine-protein phosphatase PP-X homolog 1 (Ppx1).